We begin with the raw amino-acid sequence, 447 residues long: Naphthalene 1,2-dioxygenase system, large oxygenase component (447 aa).

Positions 37–135 (WLFLTHDSLI…IKKKCLGLKE (99 aa)) constitute a Rieske domain. [2Fe-2S] cluster is bound by residues Cys-79, His-81, Cys-99, and His-102. Fe cation is bound by residues His-206, His-211, and Asp-360.

This sequence belongs to the bacterial ring-hydroxylating dioxygenase alpha subunit family. The naphthalene dioxygenase (NDO) multicomponent enzyme system is composed of an electron transfer component and a dioxygenase component (iron sulfur protein (ISP)). The electron transfer component is composed of a ferredoxin reductase (NagAa) and a ferredoxin (NagAb), and the dioxygenase component is formed by a large alpha subunit (NagAc) and a small beta subunit (NagAd). [2Fe-2S] cluster serves as cofactor. It depends on Fe(2+) as a cofactor.

The enzyme catalyses naphthalene + NADH + O2 + H(+) = (1R,2S)-1,2-dihydronaphthalene-1,2-diol + NAD(+). Its pathway is aromatic compound metabolism; naphthalene degradation. Functionally, component of the naphthalene dioxygenase (NDO) multicomponent enzyme system which catalyzes the incorporation of both atoms of molecular oxygen into naphthalene to form cis-(1R,2S)-dihydroxy-1,2-dihydronaphthalene. The alpha subunit has a catalytic role in the holoenzyme. Also able to use styrene as substrate. This chain is Naphthalene 1,2-dioxygenase system, large oxygenase component, found in Ralstonia sp.